The chain runs to 669 residues: DNA mismatch repair protein MutL (669 aa).

The tract at residues 343–408 (SAFHRAEPEE…RAPSDSSVRE (66 aa)) is disordered. Positions 344-356 (AFHRAEPEERESQ) are enriched in basic and acidic residues. Positions 357 to 372 (PETTPQYSPQSVSTTV) are enriched in polar residues. The span at 390–408 (TDYEIKPRDRAPSDSSVRE) shows a compositional bias: basic and acidic residues.

Belongs to the DNA mismatch repair MutL/HexB family.

This protein is involved in the repair of mismatches in DNA. It is required for dam-dependent methyl-directed DNA mismatch repair. May act as a 'molecular matchmaker', a protein that promotes the formation of a stable complex between two or more DNA-binding proteins in an ATP-dependent manner without itself being part of a final effector complex. In Vibrio parahaemolyticus serotype O3:K6 (strain RIMD 2210633), this protein is DNA mismatch repair protein MutL.